A 1151-amino-acid chain; its full sequence is Chromosome partition protein Smc (1151 aa).

32–39 (PNGCGKSN) is a binding site for ATP. 4 coiled-coil regions span residues 170–218 (ISGL…AARY), 342–379 (IGRLEWEREALETAHEGHEERLAEAAEAAREAGAALGE), 407–508 (DSRT…REAQ), and 633–994 (LKQL…EGRE). 2 stretches are compositionally biased toward basic and acidic residues: residues 421-438 (RARETVEAAAEAQERAAE) and 465-480 (DEARAEAQSREAEARA). Disordered regions lie at residues 421–483 (RARE…AQRS), 806–826 (SAELAERKAETEEALREAAEA), and 862–889 (LRAAQEAEREAERQAGESREARARAEAR). A compositionally biased stretch (basic and acidic residues) spans 866 to 889 (QEAEREAERQAGESREARARAEAR).

The protein belongs to the SMC family. Homodimer.

The protein localises to the cytoplasm. In terms of biological role, required for chromosome condensation and partitioning. This chain is Chromosome partition protein Smc, found in Cereibacter sphaeroides (strain ATCC 17029 / ATH 2.4.9) (Rhodobacter sphaeroides).